A 372-amino-acid polypeptide reads, in one-letter code: L-selectin (372 aa).

Residues 1-28 (MVFPWRCQSAQRGSWSFLKLWIRTLLCC) form the signal peptide. Positions 29–38 (DLLPHHGTHC) are excised as a propeptide. Over 39–332 (WTYHYSERSM…FSKIKEGDYN (294 aa)) the chain is Extracellular. One can recognise a C-type lectin domain in the interval 55-155 (KFCKHNYTDL…ACHKRKAALC (101 aa)). 10 disulfides stabilise this stretch: cysteine 57–cysteine 155, cysteine 128–cysteine 147, cysteine 128–cysteine 160, cysteine 160–cysteine 171, cysteine 165–cysteine 180, cysteine 182–cysteine 191, cysteine 197–cysteine 241, cysteine 227–cysteine 254, cysteine 259–cysteine 303, and cysteine 289–cysteine 316. Asparagine 60 and asparagine 104 each carry an N-linked (GlcNAc...) asparagine glycan. The Ca(2+) site is built by glutamate 118, asparagine 120, glutamate 126, asparagine 143, and aspartate 144. In terms of domain architecture, EGF-like spans 156 to 192 (YTASCQPESCNRHGECVETINNNTCICDPGYYGPQCQ). The N-linked (GlcNAc...) asparagine glycan is linked to asparagine 177. Sushi domains lie at 195-256 (IQCE…ICQV) and 257-318 (IQCM…ICQK). N-linked (GlcNAc...) asparagine glycosylation is found at asparagine 226, asparagine 246, and asparagine 278. A helical transmembrane segment spans residues 333–355 (PLFIPVAVMVTAFSGLAFIIWLA). Residues 356-372 (RRLKKGKKSQERMDDPY) are Cytoplasmic-facing.

This sequence belongs to the selectin/LECAM family. In terms of assembly, interaction with SELPLG/PSGL1 and PODXL2 is required for promoting recruitment and rolling of leukocytes. This interaction is dependent on the sialyl Lewis X glycan modification of SELPLG and PODXL2, and tyrosine sulfation modifications of SELPLG. Sulfation on 'Tyr-51' of SELPLG is important for L-selectin binding. Post-translationally, N-glycosylated. In terms of tissue distribution, expressed in peripheral blood mononuclear cells (PBMC), spleen and thymus.

The protein localises to the cell membrane. In terms of biological role, calcium-dependent lectin that mediates cell adhesion by binding to glycoproteins on neighboring cells. Mediates the adherence of lymphocytes to endothelial cells of high endothelial venules in peripheral lymph nodes. Promotes initial tethering and rolling of leukocytes in endothelia. This is L-selectin (Sell) from Rattus norvegicus (Rat).